A 154-amino-acid chain; its full sequence is Plastocyanin, chloroplastic (154 aa).

Residues 1-57 (MAALSSAAVTIPSMAPSAPGRRRMRSSLVVRASLGKAAGAAAVAVAASAMLAGGAMA) constitute a chloroplast transit peptide. In terms of domain architecture, Plastocyanin-like spans 58-154 (QEVLLGANGG…AGMVGKVTVN (97 aa)). Cu cation-binding residues include His94, Cys139, His142, and Met147.

Belongs to the plastocyanin family. Requires Cu(2+) as cofactor.

It is found in the plastid. The protein localises to the chloroplast thylakoid membrane. Its function is as follows. Participates in electron transfer between P700 and the cytochrome b6-f complex in photosystem I. In Oryza sativa subsp. indica (Rice), this protein is Plastocyanin, chloroplastic (PETE).